The primary structure comprises 908 residues: Transcriptional repressor ILP1 (908 aa).

Disordered regions lie at residues 1–113 (MGSN…PQAG) and 238–277 (VGPR…EEDK). The span at 25-47 (ATPSSKPTSTLSSSKPKTLSASA) shows a compositional bias: low complexity. Residues 426–453 (MQNKGSLIEEIEDQMKELNEKHALSILE) adopt a coiled-coil conformation. The segment covering 513 to 530 (EFGRDENLQKRREVEQRA) has biased composition (basic and acidic residues). Residues 513–574 (EFGRDENLQK…ESDTETSAYK (62 aa)) form a disordered region.

The protein belongs to the GCF family. As to quaternary structure, interacts with STIPL1/NTR1.

The protein localises to the nucleus. Transcriptional repressor regulating endoreduplication through control of A-type cyclins expression. Does not bind to promoter sequences (in vitro) and may act by interacting with tissue-specific transcription factors. Enhances the endocycle in endoreduplicating cells in seedlings. Required for efficient splicing. The chain is Transcriptional repressor ILP1 from Arabidopsis thaliana (Mouse-ear cress).